Consider the following 402-residue polypeptide: S-adenosylmethionine synthase (402 aa).

His15 is a binding site for ATP. Residue Asp17 coordinates Mg(2+). Residue Glu43 coordinates K(+). Glu56 and Gln99 together coordinate L-methionine. The flexible loop stretch occupies residues 99-109 (QSPDIAQGVDT). Residues 174-176 (DGK), 247-248 (RF), Asp256, 262-263 (RK), Ala279, and Lys283 each bind ATP. Residue Asp256 coordinates L-methionine. Residue Lys287 coordinates L-methionine.

The protein belongs to the AdoMet synthase family. Homotetramer; dimer of dimers. Mg(2+) is required as a cofactor. The cofactor is K(+).

Its subcellular location is the cytoplasm. It catalyses the reaction L-methionine + ATP + H2O = S-adenosyl-L-methionine + phosphate + diphosphate. It functions in the pathway amino-acid biosynthesis; S-adenosyl-L-methionine biosynthesis; S-adenosyl-L-methionine from L-methionine: step 1/1. Its function is as follows. Catalyzes the formation of S-adenosylmethionine (AdoMet) from methionine and ATP. The overall synthetic reaction is composed of two sequential steps, AdoMet formation and the subsequent tripolyphosphate hydrolysis which occurs prior to release of AdoMet from the enzyme. The polypeptide is S-adenosylmethionine synthase (Streptomyces avermitilis (strain ATCC 31267 / DSM 46492 / JCM 5070 / NBRC 14893 / NCIMB 12804 / NRRL 8165 / MA-4680)).